Consider the following 97-residue polypeptide: Large ribosomal subunit protein bL27 (97 aa).

Positions 1 to 9 (MFTFDLQLF) are excised as a propeptide.

This sequence belongs to the bacterial ribosomal protein bL27 family. The N-terminus is cleaved by ribosomal processing cysteine protease Prp.

This chain is Large ribosomal subunit protein bL27, found in Syntrophomonas wolfei subsp. wolfei (strain DSM 2245B / Goettingen).